The chain runs to 3343 residues: Cadherin-3 (3343 aa).

Residues 1 to 26 form the signal peptide; the sequence is MTIRIFFSIFLLNHLIFFHLFNFTHQ. The N-linked (GlcNAc...) asparagine glycan is linked to Asn-22. Topologically, residues 27-3228 are extracellular; that stretch reads FSEETIKFSV…LFSNFSNTTT (3202 aa). Cadherin domains follow at residues 28 to 117, 118 to 229, and 242 to 330; these read SEET…SPIF, PIDV…PPNF, and PNTK…EPNI. 6 N-linked (GlcNAc...) asparagine glycosylation sites follow: Asn-149, Asn-250, Asn-288, Asn-369, Asn-467, and Asn-612. Residues 632-738 enclose the Cadherin 4 domain; it reads ICQITEIHVL…EDVNDNVPKF (107 aa). Asn-752, Asn-806, Asn-941, Asn-966, Asn-970, Asn-985, Asn-1042, Asn-1335, Asn-1425, Asn-1429, Asn-1557, Asn-1563, Asn-1597, Asn-1624, Asn-1695, and Asn-1702 each carry an N-linked (GlcNAc...) asparagine glycan. One can recognise a Cadherin 5 domain in the interval 1279–1368; that stretch reads RENELMFEIE…ADVNDNKPKI (90 aa). Cadherin domains follow at residues 1545 to 1648, 1676 to 1756, and 1757 to 1857; these read DKAA…APRF, AEDL…TPEF, and ELSS…HPMI. Asn-1895 and Asn-1900 each carry an N-linked (GlcNAc...) asparagine glycan. 3 consecutive Cadherin domains span residues 1954 to 2045, 2046 to 2145, and 2146 to 2245; these read TVSV…SPRF, DQQL…NAPR, and FSRI…APIF. Residues Asn-2053, Asn-2129, Asn-2203, Asn-2382, Asn-2391, Asn-2410, Asn-2414, Asn-2431, Asn-2527, Asn-2530, Asn-2564, Asn-2621, Asn-2665, Asn-2712, Asn-2798, Asn-2809, Asn-2927, Asn-2976, and Asn-3045 are each glycosylated (N-linked (GlcNAc...) asparagine). Residues 3040-3205 form the Laminin G-like domain; it reads EISVRNGTSH…SSTGTSRNEC (166 aa). Cys-3172 and Cys-3205 are joined by a disulfide. N-linked (GlcNAc...) asparagine glycosylation is found at Asn-3222 and Asn-3225. The chain crosses the membrane as a helical span at residues 3229–3250; the sequence is LILLITLALISLIGFSVCLLAI. The Cytoplasmic portion of the chain corresponds to 3251 to 3343; it reads RRRWRQKSPG…RDGHINMAYL (93 aa). The tract at residues 3257–3277 is disordered; it reads KSPGDQKQTERSNGWTGHVMP.

Expressed in the anchor cell.

The protein localises to the cell membrane. It is found in the basolateral cell membrane. It localises to the cell junction. Functionally, cell adhesion protein involved in the control of epithelial morphogenesis. Together with metalloproteinase zmp-1 and hemicentin him-4, plays a role in anchor cell (AC) invasion during postembryonic vulval development. This is Cadherin-3 (cdh-3) from Caenorhabditis elegans.